The following is a 1875-amino-acid chain: Soluble starch synthase 3a, chloroplastic/amyloplastic (1875 aa).

Residues Met-1–Arg-49 constitute a chloroplast transit peptide. A coiled-coil region spans residues Lys-1007 to His-1065. The interval Ala-1014–Gln-1043 is disordered.

Belongs to the glycosyltransferase 1 family. Bacterial/plant glycogen synthase subfamily. In terms of tissue distribution, expressed in the endosperm.

The protein resides in the plastid. Its subcellular location is the chloroplast. The protein localises to the amyloplast. The catalysed reaction is [(1-&gt;4)-alpha-D-glucosyl](n) + ADP-alpha-D-glucose = [(1-&gt;4)-alpha-D-glucosyl](n+1) + ADP + H(+). It functions in the pathway glycan biosynthesis; starch biosynthesis. Functionally, involved in starch synthesis in endosperm amyloplasts. Plays an important role in the elongation of amylopectin B chains. This chain is Soluble starch synthase 3a, chloroplastic/amyloplastic, found in Oryza sativa subsp. japonica (Rice).